Here is a 497-residue protein sequence, read N- to C-terminus: Anthranilate synthase component 1 (497 aa).

L-tryptophan-binding positions include serine 49 and 271-273 (PYL). 312 to 313 (GT) is a chorismate binding site. Glutamate 339 contributes to the Mg(2+) binding site. Chorismate-binding positions include arginine 447, 461 to 463 (GAG), and glycine 463. A Mg(2+)-binding site is contributed by glutamate 476.

Belongs to the anthranilate synthase component I family. In terms of assembly, heterotetramer consisting of two non-identical subunits: a beta subunit (TrpG) and a large alpha subunit (TrpE). It depends on Mg(2+) as a cofactor.

The enzyme catalyses chorismate + L-glutamine = anthranilate + pyruvate + L-glutamate + H(+). The protein operates within amino-acid biosynthesis; L-tryptophan biosynthesis; L-tryptophan from chorismate: step 1/5. With respect to regulation, feedback inhibited by tryptophan. In terms of biological role, part of a heterotetrameric complex that catalyzes the two-step biosynthesis of anthranilate, an intermediate in the biosynthesis of L-tryptophan. In the first step, the glutamine-binding beta subunit (TrpG) of anthranilate synthase (AS) provides the glutamine amidotransferase activity which generates ammonia as a substrate that, along with chorismate, is used in the second step, catalyzed by the large alpha subunit of AS (TrpE) to produce anthranilate. In the absence of TrpG, TrpE can synthesize anthranilate directly from chorismate and high concentrations of ammonia. This Acinetobacter calcoaceticus protein is Anthranilate synthase component 1 (trpE).